We begin with the raw amino-acid sequence, 220 residues long: Deoxyribose-phosphate aldolase (220 aa).

Aspartate 89 (proton donor/acceptor) is an active-site residue. Lysine 151 acts as the Schiff-base intermediate with acetaldehyde in catalysis. The Proton donor/acceptor role is filled by lysine 180.

It belongs to the DeoC/FbaB aldolase family. DeoC type 1 subfamily.

It is found in the cytoplasm. The enzyme catalyses 2-deoxy-D-ribose 5-phosphate = D-glyceraldehyde 3-phosphate + acetaldehyde. It participates in carbohydrate degradation; 2-deoxy-D-ribose 1-phosphate degradation; D-glyceraldehyde 3-phosphate and acetaldehyde from 2-deoxy-alpha-D-ribose 1-phosphate: step 2/2. Catalyzes a reversible aldol reaction between acetaldehyde and D-glyceraldehyde 3-phosphate to generate 2-deoxy-D-ribose 5-phosphate. The protein is Deoxyribose-phosphate aldolase of Streptococcus pneumoniae (strain Taiwan19F-14).